Reading from the N-terminus, the 448-residue chain is Histidine--tRNA ligase (448 aa).

Belongs to the class-II aminoacyl-tRNA synthetase family. As to quaternary structure, homodimer.

The protein resides in the cytoplasm. It catalyses the reaction tRNA(His) + L-histidine + ATP = L-histidyl-tRNA(His) + AMP + diphosphate + H(+). The protein is Histidine--tRNA ligase of Treponema denticola (strain ATCC 35405 / DSM 14222 / CIP 103919 / JCM 8153 / KCTC 15104).